The sequence spans 133 residues: Small ribosomal subunit protein uS8 (133 aa).

This sequence belongs to the universal ribosomal protein uS8 family. As to quaternary structure, part of the 30S ribosomal subunit. Contacts proteins S5 and S12.

Functionally, one of the primary rRNA binding proteins, it binds directly to 16S rRNA central domain where it helps coordinate assembly of the platform of the 30S subunit. In Deinococcus radiodurans (strain ATCC 13939 / DSM 20539 / JCM 16871 / CCUG 27074 / LMG 4051 / NBRC 15346 / NCIMB 9279 / VKM B-1422 / R1), this protein is Small ribosomal subunit protein uS8.